The following is a 281-amino-acid chain: MKYIGAHVSAAGGVENTIARAQAIGANAFALFTKNQRQWQAAPLSEASIRAFKLACEKAGFRPEQILPHDSYLINLGHPDPDGLAKSRDAFLDEIKRCEQLGLCYLNFHPGSHLKQIPEAASLTLVSESINWALERSQGVTAVIENTAGQGTNLGWSFEHLATLIDGVEDKSRVGICFDTCHAFAAGYDLRTPESCAQVFADFDRIVGFQYLKGMHINGAKCTFGSRVDRHHSLREGNLGEAVFHHIMNDDRFDGIPLVLETIDETIWGDEISWLRSLAKA.

Zn(2+)-binding residues include His69, His109, Glu145, Asp179, His182, His216, Asp229, His231, and Glu261.

Belongs to the AP endonuclease 2 family. Zn(2+) is required as a cofactor.

The enzyme catalyses Endonucleolytic cleavage to 5'-phosphooligonucleotide end-products.. Endonuclease IV plays a role in DNA repair. It cleaves phosphodiester bonds at apurinic or apyrimidinic (AP) sites, generating a 3'-hydroxyl group and a 5'-terminal sugar phosphate. This Aeromonas salmonicida (strain A449) protein is Probable endonuclease 4.